The sequence spans 172 residues: Single-stranded DNA-binding protein A (172 aa).

The SSB domain maps to 1 to 104 (MLNRVVLVGR…VQAESVQFLE (104 aa)). Y82 carries the phosphotyrosine modification. The tract at residues 103–172 (LEPKNGGGSG…IDISDDDLPF (70 aa)) is disordered. Over residues 107–131 (NGGGSGSGGYNEGNSGGGQYFGGGQ) the composition is skewed to gly residues. Over residues 132 to 149 (NDNPFGGNQNNQRRNQGN) the composition is skewed to low complexity. The Important for interaction with partner proteins signature appears at 167–172 (DDDLPF).

In terms of assembly, homotetramer. Interacts with proteins involved in DNA metabolism such as PriA, RecQ, RecG, RecS, DnaE, RarA, RecJ, RecO, SbcC, RecD2 (formerly YrrC), XseA and Ung. Interacts with RecQ via its 10 C-terminal residues. Interacts with RecD2. Phosphorylated by YwqD, which increases ssDNA affinity; dephosphorylated by YwqE.

The protein resides in the cytoplasm. It localises to the nucleoid. In terms of biological role, plays an important role in DNA replication, recombination and repair. Binds to single-stranded (ss)DNA and to an array of partner proteins to recruit them to their sites of action during DNA metabolism. Associates with oriC, this requires DnaA. SsbA binding to ssDNA prevents DnaB and DnaD individually from binding to DNA. Has a 20-fold higher affinity for ssDNA than SsbB; SsbA and DprA activate the homologous DNA strand exchange function of RecA-ATP. Enhances the activity of 3'-5' DNA helicase RecQ. The polypeptide is Single-stranded DNA-binding protein A (ssbA) (Bacillus subtilis (strain 168)).